Here is a 156-residue protein sequence, read N- to C-terminus: Small ribosomal subunit protein uS7 (156 aa).

It belongs to the universal ribosomal protein uS7 family. In terms of assembly, part of the 30S ribosomal subunit. Contacts proteins S9 and S11.

Functionally, one of the primary rRNA binding proteins, it binds directly to 16S rRNA where it nucleates assembly of the head domain of the 30S subunit. Is located at the subunit interface close to the decoding center, probably blocks exit of the E-site tRNA. This is Small ribosomal subunit protein uS7 from Rhodopseudomonas palustris (strain BisA53).